A 660-amino-acid polypeptide reads, in one-letter code: U-box domain-containing protein 13 (660 aa).

A disordered region spans residues Asp-227–Lys-252. The span at Gly-236–Ser-250 shows a compositional bias: polar residues. The region spanning Val-255–Glu-329 is the U-box domain. ARM repeat units follow at residues Ala-384–Ile-423, Glu-425–Val-464, Asp-466–Ile-505, Gln-507–Ser-546, and Pro-548–Ser-587. The disordered stretch occupies residues Ala-631–Thr-660. Residues Pro-651–Thr-660 are compositionally biased toward polar residues.

As to quaternary structure, binds to SD11, SD16, SD17, SD18, SD113, SD129 and SD25. Post-translationally, phosphorylated by SD1-6 and SD1-7.

The protein resides in the nucleus. It localises to the cytoplasm. The enzyme catalyses S-ubiquitinyl-[E2 ubiquitin-conjugating enzyme]-L-cysteine + [acceptor protein]-L-lysine = [E2 ubiquitin-conjugating enzyme]-L-cysteine + N(6)-ubiquitinyl-[acceptor protein]-L-lysine.. The protein operates within protein modification; protein ubiquitination. Functionally, functions as an E3 ubiquitin ligase. The sequence is that of U-box domain-containing protein 13 (PUB13) from Arabidopsis thaliana (Mouse-ear cress).